The sequence spans 378 residues: Alanine racemase (378 aa).

Residue K35 is the Proton acceptor; specific for D-alanine of the active site. At K35 the chain carries N6-(pyridoxal phosphate)lysine. R133 serves as a coordination point for substrate. Y266 serves as the catalytic Proton acceptor; specific for L-alanine. Residue M314 participates in substrate binding.

It belongs to the alanine racemase family. It depends on pyridoxal 5'-phosphate as a cofactor.

The enzyme catalyses L-alanine = D-alanine. Its pathway is amino-acid biosynthesis; D-alanine biosynthesis; D-alanine from L-alanine: step 1/1. Its function is as follows. Catalyzes the interconversion of L-alanine and D-alanine. May also act on other amino acids. The sequence is that of Alanine racemase (alr) from Beutenbergia cavernae (strain ATCC BAA-8 / DSM 12333 / CCUG 43141 / JCM 11478 / NBRC 16432 / NCIMB 13614 / HKI 0122).